The primary structure comprises 526 residues: GMP synthase [glutamine-hydrolyzing] (526 aa).

Residues 9–208 (RILILDFGSQ…VKDICGCECL (200 aa)) form the Glutamine amidotransferase type-1 domain. C86 serves as the catalytic Nucleophile. Residues H182 and E184 contribute to the active site. In terms of domain architecture, GMPS ATP-PPase spans 209–401 (WTPATIIDDA…LGLPYDMLYR (193 aa)). 236–242 (SGGVDSS) provides a ligand contact to ATP.

As to quaternary structure, homodimer.

It carries out the reaction XMP + L-glutamine + ATP + H2O = GMP + L-glutamate + AMP + diphosphate + 2 H(+). Its pathway is purine metabolism; GMP biosynthesis; GMP from XMP (L-Gln route): step 1/1. Catalyzes the synthesis of GMP from XMP. The chain is GMP synthase [glutamine-hydrolyzing] from Aeromonas salmonicida (strain A449).